The sequence spans 262 residues: MAHLLEKTRKITSILKRSEEQLQDELPYNAITRQLADIIHCNACIINSKGRLLGYFMRYKTNTDRVEQFFQTKIFPDDYVQGANMIYETEANLPVEHDMSIFPVESRDDFPDGLTTIAPIHVSGIRLGSLIIWRNDKKFEDEDLVLVEIASTVVGIQLLNFQREEDEKNIRRRTAVTMAVNTLSYSELRAVSAILGELNGNEGKLTASVIADRIGITRSVIVNALRKLESAGIIESRSLGMKGTYLKVLISDIFEEVKKRDY.

The GAF domain stretch occupies residues 1–159 (MAHLLEKTRK…ASTVVGIQLL (159 aa)). The H-T-H motif DNA-binding region spans 207–226 (ASVIADRIGITRSVIVNALR).

The protein belongs to the CodY family.

Its subcellular location is the cytoplasm. Its function is as follows. DNA-binding global transcriptional regulator which is involved in the adaptive response to starvation and acts by directly or indirectly controlling the expression of numerous genes in response to nutrient availability. During rapid exponential growth, CodY is highly active and represses genes whose products allow adaptation to nutrient depletion. This chain is Global transcriptional regulator CodY, found in Streptococcus pneumoniae (strain JJA).